A 505-amino-acid polypeptide reads, in one-letter code: uncharacterized protein (505 aa).

Residues 461–480 (RTDVHPGNSDDEGAYSSADS) form a disordered region.

It to M.jannaschii MJ0787.

This is an uncharacterized protein from Methanothermobacter thermautotrophicus (strain ATCC 29096 / DSM 1053 / JCM 10044 / NBRC 100330 / Delta H) (Methanobacterium thermoautotrophicum).